A 137-amino-acid polypeptide reads, in one-letter code: UBAP1-MVB12-associated (UMA)-domain containing protein 1 (137 aa).

Residues 1–72 (MFHFFRKPPE…VSDPEMENKA (72 aa)) are disordered. Positions 32–44 (DEQRMTARGKTSD) are enriched in basic and acidic residues. Over residues 50-63 (PLETNKENSSSVTV) the composition is skewed to polar residues. The UMA domain occupies 86–134 (LSDVPFTLAPHVLAVQGTITDLPDHLLSYDGSENLSRFWYDFTLENSVL).

The protein is UBAP1-MVB12-associated (UMA)-domain containing protein 1 of Homo sapiens (Human).